The sequence spans 565 residues: E3 ubiquitin-protein ligase ipaH7.8 (565 aa).

The disordered stretch occupies residues 1–22; it reads MFSVNNTHSSVSCSPSINSNST. The interval 1-262 is interaction with target proteins; that stretch reads MFSVNNTHSS…YHGPQIYFSM (262 aa). The span at 9-22 shows a compositional bias: low complexity; that stretch reads SSVSCSPSINSNST. LRR repeat units lie at residues 58-79, 80-97, 98-119, 120-137, 138-157, 158-179, 180-199, 202-223, and 225-248; these read QEAV…PKHI, SALI…KLPA, FLKE…PESL, TTLS…VLPN, HLTS…ALPE, KLKF…PDKL, EILC…SDRN, RQKE…FSQL, and SSYR…QRLT. The interval 263 to 270 is linker; the sequence is SDGQQNTL. The interval 271–565 is E3 ubiquitin-protein ligase catalytic domain; it reads HRPLADAVTA…SENGSRLHHS (295 aa). Residues 273–565 form the NEL domain; the sequence is PLADAVTAWF…SENGSRLHHS (293 aa). Cys-357 serves as the catalytic Glycyl thioester intermediate.

The protein belongs to the LRR-containing bacterial E3 ligase family. Ubiquitinated in the presence of host E1 ubiquitin-activating enzyme, E2 ubiquitin-conjugating enzyme and ubiquitin.

The protein localises to the secreted. The protein resides in the host cytoplasm. The catalysed reaction is S-ubiquitinyl-[E2 ubiquitin-conjugating enzyme]-L-cysteine + [acceptor protein]-L-lysine = [E2 ubiquitin-conjugating enzyme]-L-cysteine + N(6)-ubiquitinyl-[acceptor protein]-L-lysine.. It participates in protein modification; protein ubiquitination. Its function is as follows. E3 ubiquitin ligase effector protein that interferes with host's innate immunity. Functions to alter host cell physiology and promote bacterial survival in host tissues. Catalyzes ubiquitination of human gasdermins GSDMB and GSDMD, promoting their degradation by the proteasome, thereby preventing cell death. In contrast, activates host cell pyroptosis in mouse cells: catalyzes ubiquitination of mouse Nlrp1b allele 1 protein, releasing the cleaved C-terminal part of Nlrp1b, which polymerizes and forms the Nlrp1b inflammasome followed by host cell pyroptosis. Does not catalyze ubiquitination of mouse GSDMD. This Shigella flexneri protein is E3 ubiquitin-protein ligase ipaH7.8.